Reading from the N-terminus, the 490-residue chain is Ribulose bisphosphate carboxylase large chain (490 aa).

Residues Asn-127 and Thr-177 each coordinate substrate. The active-site Proton acceptor is Lys-179. Lys-181 lines the substrate pocket. 3 residues coordinate Mg(2+): Lys-205, Asp-207, and Glu-208. N6-carboxylysine is present on Lys-205. Catalysis depends on His-297, which acts as the Proton acceptor. Substrate is bound by residues Arg-298, His-330, and Ser-382.

This sequence belongs to the RuBisCO large chain family. Type I subfamily. Heterohexadecamer of 8 large chains and 8 small chains. The cofactor is Mg(2+).

The protein localises to the plastid. It localises to the chloroplast. The enzyme catalyses 2 (2R)-3-phosphoglycerate + 2 H(+) = D-ribulose 1,5-bisphosphate + CO2 + H2O. The catalysed reaction is D-ribulose 1,5-bisphosphate + O2 = 2-phosphoglycolate + (2R)-3-phosphoglycerate + 2 H(+). Its function is as follows. RuBisCO catalyzes two reactions: the carboxylation of D-ribulose 1,5-bisphosphate, the primary event in carbon dioxide fixation, as well as the oxidative fragmentation of the pentose substrate in the photorespiration process. Both reactions occur simultaneously and in competition at the same active site. The sequence is that of Ribulose bisphosphate carboxylase large chain from Cylindrotheca sp. (strain N1) (Marine diatom).